A 92-amino-acid chain; its full sequence is Large ribosomal subunit protein eL43 (92 aa).

Residues cysteine 39, cysteine 42, cysteine 57, and cysteine 60 each coordinate Zn(2+). The C4-type zinc-finger motif lies at 39 to 60 (CSFCGKTKMKRKAVGIWHCGSC).

Belongs to the eukaryotic ribosomal protein eL43 family. Component of the large ribosomal subunit.

Its subcellular location is the cytoplasm. Component of the large ribosomal subunit. The ribosome is a large ribonucleoprotein complex responsible for the synthesis of proteins in the cell. This chain is Large ribosomal subunit protein eL43 (RPL37A), found in Gallus gallus (Chicken).